We begin with the raw amino-acid sequence, 155 residues long: HTH-type transcriptional regulator IscR (155 aa).

The HTH rrf2-type domain maps to 2-136; that stretch reads KLSTKGRYAM…HQTRLSDIIK (135 aa). The H-T-H motif DNA-binding region spans 30-53; that stretch reads LAEVSKRQDISLPYLEQLFVKLRR. A heme regulatory motif (HRM) region spans residues 141–145; sequence PCPAV. Residue C142 participates in [2Fe-2S] cluster binding.

[2Fe-2S] cluster is required as a cofactor.

Its function is as follows. Regulates the transcription of several operons and genes involved in the biogenesis of Fe-S clusters and Fe-S-containing proteins. Functions as a transcriptional repressor of genes involved in iron metabolism by directly binding to the promoter region of genes preceded by the Iron-Rhodo-box motif. Binds to iscR and hemP promoter regions independently of an Fe-S cluster, but their transcriptional repression is Fe-S cluster-dependent. Seems to activate some target genes in a Fe-S cluster-independent manner. Negatively regulates its own transcription in the presence of iron only. The sequence is that of HTH-type transcriptional regulator IscR from Cereibacter sphaeroides (strain ATCC 17023 / DSM 158 / JCM 6121 / CCUG 31486 / LMG 2827 / NBRC 12203 / NCIMB 8253 / ATH 2.4.1.) (Rhodobacter sphaeroides).